Consider the following 119-residue polypeptide: C-C motif chemokine 24 (119 aa).

The N-terminal stretch at 1 to 26 is a signal peptide; it reads MAGLMTIVTSLLFLGVCAHHIIPTGS. 2 disulfides stabilise this stretch: cysteine 33–cysteine 58 and cysteine 34–cysteine 74. Asparagine 115 carries N-linked (GlcNAc...) asparagine glycosylation.

It belongs to the intercrine beta (chemokine CC) family. N-glycosylated. Activated monocytes and activated T lymphocytes.

The protein resides in the secreted. Its function is as follows. Chemotactic for resting T-lymphocytes, and eosinophils. Has lower chemotactic activity for neutrophils but none for monocytes and activated lymphocytes. Is a strong suppressor of colony formation by a multipotential hematopoietic progenitor cell line. Binds to CCR3. This Homo sapiens (Human) protein is C-C motif chemokine 24.